The chain runs to 523 residues: Putative glucosylceramidase 1 (523 aa).

The first 23 residues, 1-23 (MKSRFLLKIFIFLAVFGVDSVRA), serve as a signal peptide directing secretion. Asparagine 168 is a glycosylation site (N-linked (GlcNAc...) asparagine). Residue glutamate 358 is the Nucleophile of the active site.

The protein belongs to the glycosyl hydrolase 30 family.

It carries out the reaction a beta-D-glucosylceramide + H2O = an N-acyl-sphingoid base + D-glucose. It catalyses the reaction a beta-D-glucosyl-(1&lt;-&gt;1')-N-acylsphing-4-enine + H2O = an N-acylsphing-4-enine + D-glucose. The catalysed reaction is an N-acyl-1-beta-D-glucosyl-15-methylhexadecasphing-4-enine + H2O = an N-acyl-15-methylhexadecasphing-4-enine + D-glucose. It participates in lipid metabolism; sphingolipid metabolism. Its function is as follows. Glucosylceramidase that catalyzes the hydrolysis of glucosylceramides into free ceramides and glucose. C.elegans contains specific sphingoid bases, which are unique or different in structure compared to the sphingoid bases found in other animals. Two examples of these distinctive compounds are: 15-methylhexadecasphinganine and 15-methylhexadecasphing-4-enine. The sequence is that of Putative glucosylceramidase 1 (gba-1) from Caenorhabditis elegans.